A 552-amino-acid chain; its full sequence is Hyaluronan synthase 2 (552 aa).

Over 1 to 11 (MHCERFLCILR) the chain is Cytoplasmic. The chain crosses the membrane as a helical span at residues 12–32 (IIGTTLFGVSLLLGITAAYIV). The Extracellular portion of the chain corresponds to 33 to 45 (GYQFIQTDNYYFS). Residues 46-66 (FGLYGAFLASHLIIQSLFAFL) form a helical membrane-spanning segment. Residues 67-374 (EHRKMKKSLE…NAMWFHKHHL (308 aa)) lie on the Cytoplasmic side of the membrane. Thr110 is modified (phosphothreonine). A Glycyl lysine isopeptide (Lys-Gly) (interchain with G-Cter in ubiquitin) cross-link involves residue Lys190. Residue Ser221 is glycosylated (O-linked (GlcNAc) serine). Thr328 is subject to Phosphothreonine. A helical transmembrane segment spans residues 375–395 (WMTYEAVITGFFPFFLIATVI). The Extracellular portion of the chain corresponds to 396-402 (QLFYRGK). The helical transmembrane segment at 403–423 (IWNTLLFLLTVQLVGLIKSSF) threads the bilayer. Topologically, residues 424-429 (ASCLRG) are cytoplasmic. Residues 430-450 (NIVMVFMSLYSVLYMSSLLPA) traverse the membrane as a helical segment. Over 451 to 475 (KMFAIATINKAGWGTSGRKTIVVNF) the chain is Extracellular. The chain crosses the membrane as a helical span at residues 476 to 496 (IGLIPVSVWFTILLGGVIFTI). Topologically, residues 497 to 510 (YKESKKPFSESKQT) are cytoplasmic. The chain crosses the membrane as a helical span at residues 511-531 (VLIVGTLLYACYWVMLLTLYV). At 532 to 552 (VLINKCGRRKKGQQYDMVLDV) the chain is on the extracellular side.

Belongs to the NodC/HAS family. Homodimer; dimerization promotes enzymatic activity. Forms heterodimer with HAS3. Forms heterodimer with HAS1. It depends on Mg(2+) as a cofactor. Phosphorylation at Thr-328 is essential for hyaluronan synthase activity. In terms of processing, O-GlcNAcylation at Ser-221 increases the stability of HAS2 and plasma membrane localization. Post-translationally, ubiquitination at Lys-190; this ubiquitination is essential for hyaluronan synthase activity and homo- or hetero-oligomerization. Can also be poly-ubiquitinated. Deubiquitinated by USP17 and USP4. USP17 efficiently removes 'Lys-63'- and 'Lys-48'-linked polyubiquitin chains, whereas USP4 preferentially removes monoubiquitination and, partially, both 'Lys-63'- and 'Lys-48'-linked polyubiquitin chain. As to expression, expressed in corneal endothelial cells.

The protein resides in the cell membrane. Its subcellular location is the endoplasmic reticulum membrane. It is found in the vesicle. The protein localises to the golgi apparatus membrane. It localises to the lysosome. The enzyme catalyses [hyaluronan](n) + UDP-N-acetyl-alpha-D-glucosamine = N-acetyl-beta-D-glucosaminyl-(1-&gt;4)-[hyaluronan](n) + UDP + H(+). It carries out the reaction N-acetyl-beta-D-glucosaminyl-(1-&gt;4)-[hyaluronan](n) + UDP-alpha-D-glucuronate = [hyaluronan](n+1) + UDP + H(+). It participates in glycan biosynthesis; hyaluronan biosynthesis. Catalyzes the addition of GlcNAc or GlcUA monosaccharides to the nascent hyaluronan polymer. Therefore, it is essential to hyaluronan synthesis a major component of most extracellular matrices that has a structural role in tissues architectures and regulates cell adhesion, migration and differentiation. This is one of three isoenzymes responsible for cellular hyaluronan synthesis and it is particularly responsible for the synthesis of high molecular mass hyaluronan. This Bos taurus (Bovine) protein is Hyaluronan synthase 2 (HAS2).